An 893-amino-acid polypeptide reads, in one-letter code: 26S proteasome non-ATPase regulatory subunit 2 (893 aa).

The segment at 1–59 is disordered; sequence MPQKEVTIPVPAKGGSNKEEDKKDNKDTEEKNTTTNTTTKDNKKDKKKDKKEETLSPED. Basic and acidic residues-rich tracts occupy residues 16-32 and 40-59; these read SNKEEDKKDNKDTEEKN and KDNKKDKKKDKKEETLSPED. PC repeat units lie at residues 412–445, 446–482, 483–517, 522–555, 562–583, 666–700, and 701–735; these read STVASTGMVVLWDIDGGLTKIDKFLYSQEKHCSN, GALMAIGMLTSGIRSEMDPALSLLAEHINSSNTGTRI, SAIFGLGLAYAGTQRQDLMSLLSPCLDDDKEKMEF, GLALGLIFIGSCDPELSTLFVQTLIQRGTAASES, LGLGLLYLGKQDAAELALETLK, AIPLALGLLSPSNPRIAIMDILSKLSHDNDPEVAQ, and GAILSLGLIGAGTNNARIGGMLRALAVFYGKDVHL.

Belongs to the proteasome subunit S2 family.

Its function is as follows. Acts as a regulatory subunit of the 26 proteasome which is involved in the ATP-dependent degradation of ubiquitinated proteins. The sequence is that of 26S proteasome non-ATPase regulatory subunit 2 (psmD2) from Dictyostelium discoideum (Social amoeba).